The sequence spans 671 residues: DNA ligase (671 aa).

NAD(+) is bound by residues 32–36 (DAEYD), 81–82 (SL), and E113. The active-site N6-AMP-lysine intermediate is K115. NAD(+) is bound by residues R136, E173, K290, and K314. Zn(2+)-binding residues include C408, C411, C426, and C432. In terms of domain architecture, BRCT spans 593-671 (EIDSPFAGKT…EAEMLRLLGS (79 aa)).

Belongs to the NAD-dependent DNA ligase family. LigA subfamily. Mg(2+) is required as a cofactor. Requires Mn(2+) as cofactor.

It carries out the reaction NAD(+) + (deoxyribonucleotide)n-3'-hydroxyl + 5'-phospho-(deoxyribonucleotide)m = (deoxyribonucleotide)n+m + AMP + beta-nicotinamide D-nucleotide.. Functionally, DNA ligase that catalyzes the formation of phosphodiester linkages between 5'-phosphoryl and 3'-hydroxyl groups in double-stranded DNA using NAD as a coenzyme and as the energy source for the reaction. It is essential for DNA replication and repair of damaged DNA. The chain is DNA ligase from Escherichia coli O157:H7.